The sequence spans 143 residues: Protein STIG1 (143 aa).

A signal peptide spans 1-23 (MDFIILLIAILALSSTPITIISG). Residues 76 to 87 (RTCCFNYFCVDL) form a sufficient for PI(4)P binding region. The tract at residues 80–83 (FNYF) is sufficient for binding to the extracellular domain of PRK2. A sufficient for PI(3)P binding region spans residues 88-115 (FTNRFNCGSCGLVCIVGTRCCGGICVDI).

It belongs to the STIG1 family. In terms of assembly, interacts with PRK1 and PRK2 (via extracellular domain). As to expression, expressed in the stigma and the upper section of the style.

It is found in the secreted. The protein localises to the extracellular space. Its subcellular location is the apoplast. In terms of biological role, promotes pollen tube growth. A C-terminal peptide is cleaved from the propeptide in the stigmatic exudate and represent the major form of STIG1. Binds phosphoinositol lipids. The binding of external phosphatidylinositol 3-phosphate (PI(3)P) and PRK2 by STIG1 induces a rapid intracellular reactive oxygen species elevation. This is Protein STIG1 from Solanum lycopersicum (Tomato).